Reading from the N-terminus, the 314-residue chain is 4-hydroxy-3-methylbut-2-enyl diphosphate reductase (314 aa).

Cys12 serves as a coordination point for [4Fe-4S] cluster. Positions 41 and 74 each coordinate (2E)-4-hydroxy-3-methylbut-2-enyl diphosphate. The dimethylallyl diphosphate site is built by His41 and His74. Residues His41 and His74 each coordinate isopentenyl diphosphate. Residue Cys96 participates in [4Fe-4S] cluster binding. His124 is a binding site for (2E)-4-hydroxy-3-methylbut-2-enyl diphosphate. His124 lines the dimethylallyl diphosphate pocket. Residue His124 participates in isopentenyl diphosphate binding. Residue Glu126 is the Proton donor of the active site. Thr167 is a (2E)-4-hydroxy-3-methylbut-2-enyl diphosphate binding site. Residue Cys197 coordinates [4Fe-4S] cluster. The (2E)-4-hydroxy-3-methylbut-2-enyl diphosphate site is built by Ser225, Ser226, Asn227, and Ser269. Ser225, Ser226, Asn227, and Ser269 together coordinate dimethylallyl diphosphate. Ser225, Ser226, Asn227, and Ser269 together coordinate isopentenyl diphosphate.

Belongs to the IspH family. Requires [4Fe-4S] cluster as cofactor.

The enzyme catalyses isopentenyl diphosphate + 2 oxidized [2Fe-2S]-[ferredoxin] + H2O = (2E)-4-hydroxy-3-methylbut-2-enyl diphosphate + 2 reduced [2Fe-2S]-[ferredoxin] + 2 H(+). The catalysed reaction is dimethylallyl diphosphate + 2 oxidized [2Fe-2S]-[ferredoxin] + H2O = (2E)-4-hydroxy-3-methylbut-2-enyl diphosphate + 2 reduced [2Fe-2S]-[ferredoxin] + 2 H(+). It participates in isoprenoid biosynthesis; dimethylallyl diphosphate biosynthesis; dimethylallyl diphosphate from (2E)-4-hydroxy-3-methylbutenyl diphosphate: step 1/1. Its pathway is isoprenoid biosynthesis; isopentenyl diphosphate biosynthesis via DXP pathway; isopentenyl diphosphate from 1-deoxy-D-xylulose 5-phosphate: step 6/6. In terms of biological role, catalyzes the conversion of 1-hydroxy-2-methyl-2-(E)-butenyl 4-diphosphate (HMBPP) into a mixture of isopentenyl diphosphate (IPP) and dimethylallyl diphosphate (DMAPP). Acts in the terminal step of the DOXP/MEP pathway for isoprenoid precursor biosynthesis. The protein is 4-hydroxy-3-methylbut-2-enyl diphosphate reductase of Psychromonas ingrahamii (strain DSM 17664 / CCUG 51855 / 37).